The sequence spans 194 residues: uncharacterized protein (194 aa).

The 61-residue stretch at 6 to 66 (EFDTALVLHR…SAVKSYLEGK (61 aa)) folds into the HTH tetR-type domain. A DNA-binding region (H-T-H motif) is located at residues 29–48 (SLQDLLSHLGIARQSLYDTY).

This is an uncharacterized protein from Bacillus subtilis (strain 168).